Reading from the N-terminus, the 393-residue chain is uncharacterized protein (393 aa).

The segment at 345-393 (PNKWATDDAARREMERTRKARYRAKNRAVADPEDSPPGKRLRRGPKSST) is disordered. Positions 349–361 (ATDDAARREMERT) are enriched in basic and acidic residues. The segment covering 383 to 393 (KRLRRGPKSST) has biased composition (basic residues).

This is an uncharacterized protein from Ictalurid herpesvirus 1 (strain Auburn) (IcHV-1).